Here is a 94-residue protein sequence, read N- to C-terminus: Co-chaperonin GroES (94 aa).

Belongs to the GroES chaperonin family. Heptamer of 7 subunits arranged in a ring. Interacts with the chaperonin GroEL.

It is found in the cytoplasm. Its function is as follows. Together with the chaperonin GroEL, plays an essential role in assisting protein folding. The GroEL-GroES system forms a nano-cage that allows encapsulation of the non-native substrate proteins and provides a physical environment optimized to promote and accelerate protein folding. GroES binds to the apical surface of the GroEL ring, thereby capping the opening of the GroEL channel. This is Co-chaperonin GroES from Bacillus cereus (strain ATCC 14579 / DSM 31 / CCUG 7414 / JCM 2152 / NBRC 15305 / NCIMB 9373 / NCTC 2599 / NRRL B-3711).